The primary structure comprises 466 residues: Cytochrome b561 and DOMON domain-containing protein At3g59070 (466 aa).

Residues 1 to 25 (MSLSSRATLVVLCCLFMLIPSFTTA) form the signal peptide. One can recognise a DOMON domain in the interval 57–172 (LNSYLHFNYA…TVVNHLWQDG (116 aa)). Residues 179 to 380 (RLGMHAMSGD…MEILQFKKRW (202 aa)) form the Cytochrome b561 domain. Transmembrane regions (helical) follow at residues 219-239 (IHAI…VMAA), 252-272 (WFYI…IGGL), and 287-307 (TLHT…ILSL). Residues H220, H256, H289, and H325 each coordinate heme b. A run of 2 helical transmembrane segments spans residues 327-347 (TMGY…LSIL) and 355-375 (IAYT…EILQ).

The cofactor is heme b.

Its subcellular location is the membrane. Functionally, may act as a catecholamine-responsive trans-membrane electron transporter. The sequence is that of Cytochrome b561 and DOMON domain-containing protein At3g59070 from Arabidopsis thaliana (Mouse-ear cress).